The following is a 68-amino-acid chain: Putative alpha-conotoxin Qc alphaL-1 (68 aa).

An N-terminal signal peptide occupies residues 1-21; that stretch reads MGMRMMFTMFLLVVLATTVVS. Residues 22 to 49 constitute a propeptide that is removed on maturation; the sequence is INLDHAFDGRNAAANNKATDLMARTVRR. C51 and C64 are joined by a disulfide.

This sequence belongs to the conotoxin A superfamily. As to expression, expressed by the venom duct.

The protein resides in the secreted. Alpha-conotoxins act on postsynaptic membranes, they bind to the nicotinic acetylcholine receptors (nAChR) and thus inhibit them. The protein is Putative alpha-conotoxin Qc alphaL-1 of Conus quercinus (Oak cone).